The sequence spans 877 residues: DNA (cytosine-5)-methyltransferase 3A (877 aa).

Disordered regions lie at residues Met1 to His154, Glu194 to Glu250, and Ala412 to Lys431. 2 stretches are compositionally biased toward basic and acidic residues: residues Lys107–Arg133 and Glu195–Glu206. Over residues Pro210–Thr225 the composition is skewed to polar residues. Residues Thr226 to Ser284 form the PWWP domain. Residues Ala234–Asp244 show a composition bias toward basic and acidic residues. Positions Glu447–Asp579 constitute an ADD domain. Residues Ile458 to Glu488 form a GATA-type; atypical zinc finger. The segment at Gln499–Gly555 adopts a PHD-type; atypical zinc-finger fold. The SAM-dependent MTase C5-type domain maps to Ile599–Val877. S-adenosyl-L-methionine-binding positions include Asp606–Thr610, Glu629, and Asp651–Arg653. Cys675 is a catalytic residue. Arg856–Trp858 contributes to the S-adenosyl-L-methionine binding site.

This sequence belongs to the class I-like SAM-binding methyltransferase superfamily. C5-methyltransferase family.

It localises to the nucleus. It is found in the chromosome. Its subcellular location is the cytoplasm. It carries out the reaction a 2'-deoxycytidine in DNA + S-adenosyl-L-methionine = a 5-methyl-2'-deoxycytidine in DNA + S-adenosyl-L-homocysteine + H(+). The enzyme catalyses L-cysteinyl-[protein] + S-adenosyl-L-methionine = S-methyl-L-cysteinyl-[protein] + S-adenosyl-L-homocysteine + H(+). Functionally, required for genome-wide de novo methylation and is essential for development. DNA methylation is coordinated with methylation of histones. It modifies DNA in a non-processive manner and also methylates non-CpG sites. Acts as a transcriptional corepressor for ZNF238. Can actively repress transcription through the recruitment of HDAC activity. Also has weak auto-methylation activity on some Cys residue in absence of DNA. In Gallus gallus (Chicken), this protein is DNA (cytosine-5)-methyltransferase 3A (DNMT3A).